The chain runs to 291 residues: Porphobilinogen deaminase (291 aa).

Position 237 is an S-(dipyrrolylmethanemethyl)cysteine (cysteine 237).

It belongs to the HMBS family. As to quaternary structure, monomer. It depends on dipyrromethane as a cofactor.

The enzyme catalyses 4 porphobilinogen + H2O = hydroxymethylbilane + 4 NH4(+). Its pathway is porphyrin-containing compound metabolism; protoporphyrin-IX biosynthesis; coproporphyrinogen-III from 5-aminolevulinate: step 2/4. Tetrapolymerization of the monopyrrole PBG into the hydroxymethylbilane pre-uroporphyrinogen in several discrete steps. This is Porphobilinogen deaminase from Clostridium perfringens (strain SM101 / Type A).